A 785-amino-acid chain; its full sequence is MRSCRSCNVRVLVAIVCGLLTGIVLGLGIWRMVIRINRGIFVPVPSIPVQFCRNGGTWQNGRCICTEEWKGLRCTIANFCENSTDGEFTFGSIPVGRYGPSLQTCEPGTLNAGSPKATRLCNVSEFGNIELQNVTKGSCNINLQTLEIQINNQTASAENISREAQVLTADASKLTAQNITSATTVVGQIFGKANNESQAKKTAIATVSQILDASEDVFQKAAEMDNSKSFSNLIKQMENYSYSQGDQTVVEPNIAIQSVTRDDNSGPSVLFSVQKGSSNSLVSGRILINKTANGLNPDGQTELQILLNTGENRKSCGFMVYQNHKLFQSKTFTATSDFSQKIISSKINESEQQRQNKVSVEMVFNPTYDKRELRLHSYACVYWNFLINDWDTQGCQKTGNTTEFLRCNCSHTTNFAVLMSFKKDYKYPKSLDILSNIGCALSIAGLALTILFQILTRKIRKTSVTWVLVSLCSSMLIFNLLFVFGIENSNKNLKTSDSDINVKPENNKIPESDTIETPNPSCTAIAALLHYFLLVTFTWNGLSATQLYFLLIRTMKPLPRHFIIFISLVGWGVPAIIVGVTIGSIYALSGNKRYWELDYRQEEICWLAVPKDNDYARSPLLWSFIIPVTIILITNITIFVIITVKVLWKNNQNLTSTKKVSSLKKVFSTLSIAVVFGVTWILAYAMLISNDDIRIVFSYIFCLFNTTQGLQIFILYTVRTKVFQSEASKILKSLSSSFDRTKPMPSITPLKLRVRMYNMLRSLPSLNERFRLLEPSGMTEETSLS.

The first 26 residues, 1 to 26 (MRSCRSCNVRVLVAIVCGLLTGIVLG), serve as a signal peptide directing secretion. Residues 27–435 (LGIWRMVIRI…KYPKSLDILS (409 aa)) are Extracellular-facing. 12 N-linked (GlcNAc...) asparagine glycosylation sites follow: N82, N122, N133, N152, N159, N178, N195, N239, N289, N348, N400, and N408. One can recognise a GAIN-B domain in the interval 271-425 (FSVQKGSSNS…AVLMSFKKDY (155 aa)). Cystine bridges form between C380/C407 and C395/C409. The segment at 380-425 (CVYWNFLINDWDTQGCQKTGNTTEFLRCNCSHTTNFAVLMSFKKDY) is GPS. Residues 436–456 (NIGCALSIAGLALTILFQILT) form a helical membrane-spanning segment. Residues 457–465 (RKIRKTSVT) lie on the Cytoplasmic side of the membrane. A helical transmembrane segment spans residues 466–486 (WVLVSLCSSMLIFNLLFVFGI). Residues 487–523 (ENSNKNLKTSDSDINVKPENNKIPESDTIETPNPSCT) are Extracellular-facing. Residues 524-544 (AIAALLHYFLLVTFTWNGLSA) form a helical membrane-spanning segment. At 545–561 (TQLYFLLIRTMKPLPRH) the chain is on the cytoplasmic side. A helical transmembrane segment spans residues 562 to 582 (FIIFISLVGWGVPAIIVGVTI). Over 583-623 (GSIYALSGNKRYWELDYRQEEICWLAVPKDNDYARSPLLWS) the chain is Extracellular. The helical transmembrane segment at 624–644 (FIIPVTIILITNITIFVIITV) threads the bilayer. Over 645 to 668 (KVLWKNNQNLTSTKKVSSLKKVFS) the chain is Cytoplasmic. Residues 669-689 (TLSIAVVFGVTWILAYAMLIS) form a helical membrane-spanning segment. At 690–694 (NDDIR) the chain is on the extracellular side. Residues 695–715 (IVFSYIFCLFNTTQGLQIFIL) traverse the membrane as a helical segment. The Cytoplasmic segment spans residues 716–785 (YTVRTKVFQS…SGMTEETSLS (70 aa)).

Belongs to the G-protein coupled receptor 2 family. Adhesion G-protein coupled receptor (ADGR) subfamily. As to expression, selectively expressed in the intestinal tissues.

The protein resides in the membrane. Functionally, orphan receptor. The polypeptide is Adhesion G-protein coupled receptor G7 (Adgrg7) (Mus musculus (Mouse)).